Here is a 417-residue protein sequence, read N- to C-terminus: Multifunctional CCA protein (417 aa).

ATP is bound by residues Gly-8 and Arg-11. CTP is bound by residues Gly-8 and Arg-11. Asp-21 and Asp-23 together coordinate Mg(2+). ATP-binding residues include Arg-91, Arg-137, and Arg-140. Positions 91, 137, and 140 each coordinate CTP. Residues 225 to 326 form the HD domain; it reads SGIHTLMTLQ…LNVLKKTDAF (102 aa).

It belongs to the tRNA nucleotidyltransferase/poly(A) polymerase family. Bacterial CCA-adding enzyme type 1 subfamily. Monomer. Can also form homodimers and oligomers. Mg(2+) serves as cofactor. The cofactor is Ni(2+).

The enzyme catalyses a tRNA precursor + 2 CTP + ATP = a tRNA with a 3' CCA end + 3 diphosphate. The catalysed reaction is a tRNA with a 3' CCA end + 2 CTP + ATP = a tRNA with a 3' CCACCA end + 3 diphosphate. Catalyzes the addition and repair of the essential 3'-terminal CCA sequence in tRNAs without using a nucleic acid template. Adds these three nucleotides in the order of C, C, and A to the tRNA nucleotide-73, using CTP and ATP as substrates and producing inorganic pyrophosphate. tRNA 3'-terminal CCA addition is required both for tRNA processing and repair. Also involved in tRNA surveillance by mediating tandem CCA addition to generate a CCACCA at the 3' terminus of unstable tRNAs. While stable tRNAs receive only 3'-terminal CCA, unstable tRNAs are marked with CCACCA and rapidly degraded. The polypeptide is Multifunctional CCA protein (Neisseria meningitidis serogroup A / serotype 4A (strain DSM 15465 / Z2491)).